The chain runs to 248 residues: Large ribosomal subunit protein uL30 (248 aa).

Residues 22–42 (KSQEKARAERQAEIEKKKAAN) form a disordered region. Over residues 24–42 (QEKARAERQAEIEKKKAAN) the composition is skewed to basic and acidic residues.

This sequence belongs to the universal ribosomal protein uL30 family. In terms of assembly, component of the large ribosomal subunit (LSU). Mature N.crassa ribosomes consist of a small (40S) and a large (60S) subunit. The 40S small subunit contains 1 molecule of ribosomal RNA (18S rRNA) and at least 32 different proteins. The large 60S subunit contains 3 rRNA molecules (26S, 5.8S and 5S rRNA) and at least 42 different proteins.

The protein localises to the cytoplasm. Functionally, component of the ribosome, a large ribonucleoprotein complex responsible for the synthesis of proteins in the cell. The small ribosomal subunit (SSU) binds messenger RNAs (mRNAs) and translates the encoded message by selecting cognate aminoacyl-transfer RNA (tRNA) molecules. The large subunit (LSU) contains the ribosomal catalytic site termed the peptidyl transferase center (PTC), which catalyzes the formation of peptide bonds, thereby polymerizing the amino acids delivered by tRNAs into a polypeptide chain. The nascent polypeptides leave the ribosome through a tunnel in the LSU and interact with protein factors that function in enzymatic processing, targeting, and the membrane insertion of nascent chains at the exit of the ribosomal tunnel. The chain is Large ribosomal subunit protein uL30 (rpl-7) from Neurospora crassa (strain ATCC 24698 / 74-OR23-1A / CBS 708.71 / DSM 1257 / FGSC 987).